A 247-amino-acid chain; its full sequence is PF03932 family protein CutC (247 aa).

Belongs to the CutC family.

It is found in the cytoplasm. The sequence is that of PF03932 family protein CutC from Enterobacter sp. (strain 638).